A 231-amino-acid chain; its full sequence is 2-C-methyl-D-erythritol 4-phosphate cytidylyltransferase (231 aa).

This sequence belongs to the IspD/TarI cytidylyltransferase family. IspD subfamily.

The enzyme catalyses 2-C-methyl-D-erythritol 4-phosphate + CTP + H(+) = 4-CDP-2-C-methyl-D-erythritol + diphosphate. Its pathway is isoprenoid biosynthesis; isopentenyl diphosphate biosynthesis via DXP pathway; isopentenyl diphosphate from 1-deoxy-D-xylulose 5-phosphate: step 2/6. Functionally, catalyzes the formation of 4-diphosphocytidyl-2-C-methyl-D-erythritol from CTP and 2-C-methyl-D-erythritol 4-phosphate (MEP). The protein is 2-C-methyl-D-erythritol 4-phosphate cytidylyltransferase of Bacillus licheniformis (strain ATCC 14580 / DSM 13 / JCM 2505 / CCUG 7422 / NBRC 12200 / NCIMB 9375 / NCTC 10341 / NRRL NRS-1264 / Gibson 46).